Reading from the N-terminus, the 278-residue chain is Probable endonuclease 4 (278 aa).

The Zn(2+) site is built by His69, His109, Glu145, Asp179, His182, His214, Asp227, His229, and Glu259.

Belongs to the AP endonuclease 2 family. Zn(2+) is required as a cofactor.

It catalyses the reaction Endonucleolytic cleavage to 5'-phosphooligonucleotide end-products.. Endonuclease IV plays a role in DNA repair. It cleaves phosphodiester bonds at apurinic or apyrimidinic (AP) sites, generating a 3'-hydroxyl group and a 5'-terminal sugar phosphate. The chain is Probable endonuclease 4 from Phocaeicola vulgatus (strain ATCC 8482 / DSM 1447 / JCM 5826 / CCUG 4940 / NBRC 14291 / NCTC 11154) (Bacteroides vulgatus).